The chain runs to 276 residues: Pantothenate synthetase (276 aa).

27–34 provides a ligand contact to ATP; it reads MGALHKGH. Histidine 34 functions as the Proton donor in the catalytic mechanism. Glutamine 58 provides a ligand contact to (R)-pantoate. Glutamine 58 is a binding site for beta-alanine. 147 to 150 provides a ligand contact to ATP; it reads GKKD. Glutamine 153 lines the (R)-pantoate pocket. Residues valine 176 and 184-187 contribute to the ATP site; that span reads LSSR.

This sequence belongs to the pantothenate synthetase family. As to quaternary structure, homodimer.

It is found in the cytoplasm. The catalysed reaction is (R)-pantoate + beta-alanine + ATP = (R)-pantothenate + AMP + diphosphate + H(+). It functions in the pathway cofactor biosynthesis; (R)-pantothenate biosynthesis; (R)-pantothenate from (R)-pantoate and beta-alanine: step 1/1. Catalyzes the condensation of pantoate with beta-alanine in an ATP-dependent reaction via a pantoyl-adenylate intermediate. The sequence is that of Pantothenate synthetase from Helicobacter pylori (strain ATCC 700392 / 26695) (Campylobacter pylori).